The primary structure comprises 382 residues: Alcohol dehydrogenase 4 (382 aa).

10 residues coordinate NAD(+): aspartate 40, asparagine 72, glycine 99, serine 100, threonine 139, threonine 140, threonine 148, phenylalanine 150, lysine 161, and glycine 183. Aspartate 195, histidine 199, and histidine 264 together coordinate Fe(2+). Residues histidine 268 and histidine 278 each coordinate NAD(+). Histidine 278 contributes to the Fe(2+) binding site.

The protein belongs to the iron-containing alcohol dehydrogenase family. Homodimer. Zn(2+) is required as a cofactor. Requires Fe(2+) as cofactor.

It localises to the mitochondrion. The enzyme catalyses a primary alcohol + NAD(+) = an aldehyde + NADH + H(+). It carries out the reaction ethanol + NAD(+) = acetaldehyde + NADH + H(+). Inhibited by EDTA. In terms of biological role, alcohol dehydrogenase specific for ethanol. Acts mainyl as a mitochondrial formaldehyde dehydrogenase and has no effect on ethanol production. Shows drastically reduced activity towards primary alcohols from 4 carbon atoms upward. Isomers of aliphatic alcohol, as well as secondary alcohols and glycerol are not used at all. The role of ADH4 in yeast metabolism is not yet known, but ADH4 is not responsible for the production of ethanol during growth on glucose nor responsible for the oxidation of ethanol to acetaldehyde. In Saccharomyces cerevisiae (strain ATCC 204508 / S288c) (Baker's yeast), this protein is Alcohol dehydrogenase 4.